The sequence spans 615 residues: DNA mismatch repair protein MutL (615 aa).

The interval 363 to 397 (FAEPAAREPVAPRYSPAPASGSRPAAPWPNAQPGY) is disordered. Positions 364–387 (AEPAAREPVAPRYSPAPASGSRPA) are enriched in low complexity.

Belongs to the DNA mismatch repair MutL/HexB family.

Functionally, this protein is involved in the repair of mismatches in DNA. It is required for dam-dependent methyl-directed DNA mismatch repair. May act as a 'molecular matchmaker', a protein that promotes the formation of a stable complex between two or more DNA-binding proteins in an ATP-dependent manner without itself being part of a final effector complex. In Shigella flexneri, this protein is DNA mismatch repair protein MutL.